Here is a 349-residue protein sequence, read N- to C-terminus: MMTAPKPSYSCACFYTDNIFIQEFHVHVRYTGEQQFRRDYERVLSSQGCRTSEQFRNVLETIKKEVERRRKLGEESLHRRREISLHYKPLYPEVYVLQESFLAAEFLTAVKYSKSPQANVEGLLHHLHSITDKRIYRLPVFIPEFCAKLVEELENFERSDLPKGRPNTMNNYGILLNELGFVDALTAPLCEKYIEPLTSLLFPDWGGGCLDSHRAFVVKYALQEDLDLSCHYDNAEVTLNVSLGKEFTDGNLYFSDMKEVPVNERTYAEVEHITGQGILHRGQHVHGALPISSGERWNLILWMRASDVRNKCCPMCDNEPVLVKTLGDGDGFTSVREDREQTVDICTLT.

Positions 211 to 305 (DSHRAFVVKY…RWNLILWMRA (95 aa)) constitute a Fe2OG dioxygenase domain. Residues His-231, Asp-233, and His-286 each contribute to the Fe cation site. 2-oxoglutarate is bound at residue Arg-296.

This sequence belongs to the OGFOD2 family. The cofactor is Fe(2+). L-ascorbate serves as cofactor.

In Xenopus tropicalis (Western clawed frog), this protein is 2-oxoglutarate and iron-dependent oxygenase domain-containing protein 2 (ogfod2).